The following is a 413-amino-acid chain: BSD domain-containing protein 1-A (413 aa).

The BSD domain maps to 146–198 (WLAYWDPEQRKAEISELLVTSPSIRALFTKMVPAAVSHSEFWQRYFYKVHQLE). Basic and acidic residues-rich tracts occupy residues 208–219 (KQRADQSVHSEE) and 255–271 (HVED…RDHT). Disordered stretches follow at residues 208 to 228 (KQRA…EEED) and 255 to 386 (HVED…EFDM). Residues 274-287 (TSPSESSESISPIT) show a composition bias toward low complexity. Positions 297 to 322 (QTPSKEPSPGTLTVTKENTGAGTDET) are enriched in polar residues. Residues 342–352 (QREDPPSDLRV) are compositionally biased toward basic and acidic residues. A compositionally biased stretch (polar residues) spans 356-375 (NSDSGKSTPSNNGQKGSSTD). The segment covering 376–386 (ISEDWEKEFDM) has biased composition (acidic residues).

The protein is BSD domain-containing protein 1-A (bsdc1-a) of Xenopus laevis (African clawed frog).